The following is a 403-amino-acid chain: Probable N-acetyltransferase HLS1 (403 aa).

In terms of domain architecture, N-acetyltransferase spans 2–177; sequence TVVREYDPTR…VNPVYAHRVN (176 aa).

The protein belongs to the acetyltransferase family.

Its function is as follows. Ethylene-responsive N-acetyltransferase required for differential cell elongation in the hypocotyl. Regulates apical hook formation of dark-grown seedlings. May control differential cell growth by regulating auxin activity. May be involved in negative feedback regulation of auxin homeostasis through the control of GH3-like genes. Modulates de novo shoot organogenesis. This Arabidopsis thaliana (Mouse-ear cress) protein is Probable N-acetyltransferase HLS1 (HLS1).